An 86-amino-acid chain; its full sequence is SEED MATURATION PROTEIN 1 (86 aa).

Residues 52–86 (RIEKGKEQSAASGDQTQIQRDIKDIKGTRTDDSPR) form a disordered region. Polar residues predominate over residues 60 to 70 (SAASGDQTQIQ). A compositionally biased stretch (basic and acidic residues) spans 71–86 (RDIKDIKGTRTDDSPR).

It belongs to the LEA type 3 family.

Functionally, protein chaperone involved in seed maturation and dormancy maintenance after high temperature fluctuation (e.g. secondary dormancy after 3 days at 40 degrees Celsius), probably by protecting heat labile proteins required for secondary dormancy (e.g. G6PDH, HOP3, SR45, ECP63, SCL33, RPL32B, ChlADR1, MSBP1, MBF1B, At3g01690, At1g15280, At1g15290, At2g31410, At1g11630, At1g65090, EMB2279, EMB1674 and RPL35C). The protein is SEED MATURATION PROTEIN 1 of Arabidopsis thaliana (Mouse-ear cress).